Here is a 38-residue protein sequence, read N- to C-terminus: Photosystem I reaction center subunit IX (38 aa).

The chain crosses the membrane as a helical span at residues Tyr6–Ile26.

The protein belongs to the PsaJ family.

The protein resides in the plastid. It is found in the chloroplast thylakoid membrane. May help in the organization of the PsaE and PsaF subunits. The chain is Photosystem I reaction center subunit IX from Cyanidioschyzon merolae (strain NIES-3377 / 10D) (Unicellular red alga).